Reading from the N-terminus, the 908-residue chain is Magnesium-transporting ATPase, P-type 1 (908 aa).

Over residues 1–20 (MTDMNIENRKLNRPASENDK) the composition is skewed to basic and acidic residues. The tract at residues 1–21 (MTDMNIENRKLNRPASENDKQ) is disordered. Residues 1-80 (MTDMNIENRK…QVPPALIQLL (80 aa)) are Cytoplasmic-facing. The chain crosses the membrane as a helical span at residues 81–101 (QAFNNPFIYVLMALAGVSFIT). Topologically, residues 102 to 113 (DYWLPLRRGEET) are extracellular. The chain crosses the membrane as a helical span at residues 114–134 (DLTGVLIILTMVSLSGLLRFW). The Cytoplasmic segment spans residues 135-293 (QEFRTNRAAQ…QTAFDRGVNS (159 aa)). A helical transmembrane segment spans residues 294–314 (VSWLLIRFMLIMVPVVLLING). The Extracellular segment spans residues 315-323 (FSKGDWVEA). A helical transmembrane segment spans residues 324-341 (SLFALAVAVGLTPEMLPM). Glutamate 337 serves as a coordination point for Mg(2+). The Cytoplasmic portion of the chain corresponds to 342–704 (IVSSNLAKGA…IKGRETFGNI (363 aa)). The 4-aspartylphosphate intermediate role is filled by aspartate 379. 3 residues coordinate Mg(2+): aspartate 650, aspartate 654, and asparagine 718. The helical transmembrane segment at 705-724 (IKYLNMTASSNFGNVFSVLV) threads the bilayer. Over 725–733 (ASAFIPFLP) the chain is Extracellular. The helical transmembrane segment at 734–753 (MLAIHLLIQNLMYDISQLSL) threads the bilayer. 2 residues coordinate Mg(2+): asparagine 743 and aspartate 747. The Cytoplasmic segment spans residues 754–775 (PWDKMDKEFLRKPRKWDAKNIG). The helical transmembrane segment at 776–799 (RFMLWIGPTSSIFDITTFALMWYV) threads the bilayer. At 800–808 (FAANNVEAQ) the chain is on the extracellular side. A helical transmembrane segment spans residues 809–827 (ALFQSGWFIEGLLSQTLVV). Residues 828-840 (HMLRTQKIPFIQS) lie on the Cytoplasmic side of the membrane. A helical transmembrane segment spans residues 841–860 (RATLPVLLTTGLIMAIGIYI). Topologically, residues 861–875 (PFSPLGAMVGLEPLP) are extracellular. A helical transmembrane segment spans residues 876-895 (LSYFPWLVATLLSYCLVAQG). Over 896 to 908 (MKRFYIKRFGQWF) the chain is Cytoplasmic.

The protein belongs to the cation transport ATPase (P-type) (TC 3.A.3) family. Type IIIB subfamily.

Its subcellular location is the cell inner membrane. The catalysed reaction is Mg(2+)(out) + ATP + H2O = Mg(2+)(in) + ADP + phosphate + H(+). Its function is as follows. Mediates magnesium influx to the cytosol. This chain is Magnesium-transporting ATPase, P-type 1 (mgtB), found in Salmonella typhimurium (strain LT2 / SGSC1412 / ATCC 700720).